A 431-amino-acid polypeptide reads, in one-letter code: Adenylosuccinate synthetase (431 aa).

GTP contacts are provided by residues 12 to 18 and 40 to 42; these read GDEGKGK and GHT. Asp-13 serves as the catalytic Proton acceptor. Asp-13 and Gly-40 together coordinate Mg(2+). IMP contacts are provided by residues 13-16, 38-41, Thr-128, Arg-142, Gln-223, Thr-238, and Arg-301; these read DEGK and NAGH. Residue His-41 is the Proton donor of the active site. A substrate-binding site is contributed by 297–303; that stretch reads TVTGRPR. GTP contacts are provided by residues Arg-303, 329–331, and 411–413; these read SID and SVG.

The protein belongs to the adenylosuccinate synthetase family. In terms of assembly, homodimer. Requires Mg(2+) as cofactor.

It localises to the cytoplasm. The catalysed reaction is IMP + L-aspartate + GTP = N(6)-(1,2-dicarboxyethyl)-AMP + GDP + phosphate + 2 H(+). The protein operates within purine metabolism; AMP biosynthesis via de novo pathway; AMP from IMP: step 1/2. In terms of biological role, plays an important role in the de novo pathway of purine nucleotide biosynthesis. Catalyzes the first committed step in the biosynthesis of AMP from IMP. The chain is Adenylosuccinate synthetase from Lacticaseibacillus casei (strain BL23) (Lactobacillus casei).